A 178-amino-acid polypeptide reads, in one-letter code: MDKKSNQVERPVVFFDISIGDVPVGRMKMELFSDIVPRTAENFRQLCTGEYKRNGVPQGYKNCLFHRVIKDFMVQGGDFIKGDGTGAMCIYGGDRFADENFIEKHTGAGLLSMANSGPNSNGCQFFITCDACDFLDGKHVVFGRLVDGLLTLRKIENVATGPNNRPKLPVKITECGQM.

Residues 14-177 (FFDISIGDVP…LPVKITECGQ (164 aa)) form the PPIase cyclophilin-type domain.

This sequence belongs to the cyclophilin-type PPIase family. PPIase H subfamily.

It localises to the nucleus. The enzyme catalyses [protein]-peptidylproline (omega=180) = [protein]-peptidylproline (omega=0). In terms of biological role, PPIases accelerate the folding of proteins. It catalyzes the cis-trans isomerization of proline imidic peptide bonds in oligopeptides. This Rhizopus delemar (strain RA 99-880 / ATCC MYA-4621 / FGSC 9543 / NRRL 43880) (Mucormycosis agent) protein is Peptidyl-prolyl cis-trans isomerase H (cyp7).